The following is a 22-amino-acid chain: uncharacterized protein (22 aa).

A disordered region spans residues 1–22 (MHNSIAYDKDGNSTGQKYYAYG).

This is an uncharacterized protein from Lactobacillus helveticus (Lactobacillus suntoryeus).